Here is an 880-residue protein sequence, read N- to C-terminus: Leucine-rich repeat-containing protein 66 (880 aa).

A helical transmembrane segment spans residues 4 to 24 (LYFRVITIVIGLYFTGIMTNA). Asn-45 is a glycosylation site (N-linked (GlcNAc...) asparagine). LRR repeat units lie at residues 86-107 (KIKHLDLSNNLISKITLSPFAY), 110-130 (ALEVLNLSNNAIHSLSLDLLS), 149-171 (LLKVLILQRNKLSDTPKGLWKLK), 172-193 (SLQSLDLSFNGILQIGWSDFHN), 196-217 (QLENLCLKSNKIFKIPPQAFKD), and 220-241 (KLQVIDLSNNALITILPMMIIA). Residue Asn-115 is glycosylated (N-linked (GlcNAc...) asparagine). A disordered region spans residues 319–368 (SKAERPQGGRHTGISTLGKKAKAGSGLRKKQRRLPRSVRSTRDVQAAGKK). Over residues 337 to 354 (KKAKAGSGLRKKQRRLPR) the composition is skewed to basic residues. Residues 376-396 (ALAVCLSVFITFLVAFSLGAF) form a helical membrane-spanning segment. Disordered regions lie at residues 463–504 (PHPH…NDGA) and 679–746 (VTPA…SKDN). Over residues 483–493 (GSSQSPGQCGD) the composition is skewed to polar residues. Residues 697–707 (CELESDCDSDE) are compositionally biased toward acidic residues. A compositionally biased stretch (low complexity) spans 709-720 (SLFTLSSISSES). Ser-723 carries the phosphoserine modification. Residues 737–746 (DESSGASKDN) are compositionally biased toward polar residues. A glycan (N-linked (GlcNAc...) asparagine) is linked at Asn-746. A Phosphoserine modification is found at Ser-752. A glycan (N-linked (GlcNAc...) asparagine) is linked at Asn-756. 2 disordered regions span residues 764-816 (GKCK…PLGD) and 855-880 (TPPCSAEVPSDPDKAAFHERDSDILK). Composition is skewed to basic and acidic residues over residues 788 to 800 (THLENASDTDRSE) and 865 to 880 (DPDKAAFHERDSDILK).

The protein resides in the membrane. The polypeptide is Leucine-rich repeat-containing protein 66 (LRRC66) (Homo sapiens (Human)).